Here is a 316-residue protein sequence, read N- to C-terminus: Transaldolase (316 aa).

Lys-125 serves as the catalytic Schiff-base intermediate with substrate.

Belongs to the transaldolase family. Type 1 subfamily. In terms of assembly, homodimer.

The protein resides in the cytoplasm. The catalysed reaction is D-sedoheptulose 7-phosphate + D-glyceraldehyde 3-phosphate = D-erythrose 4-phosphate + beta-D-fructose 6-phosphate. The protein operates within carbohydrate degradation; pentose phosphate pathway; D-glyceraldehyde 3-phosphate and beta-D-fructose 6-phosphate from D-ribose 5-phosphate and D-xylulose 5-phosphate (non-oxidative stage): step 2/3. Functionally, transaldolase is important for the balance of metabolites in the pentose-phosphate pathway. The protein is Transaldolase of Acidovorax sp. (strain JS42).